A 291-amino-acid polypeptide reads, in one-letter code: Homeobox protein knotted-1-like 7 (291 aa).

The region spanning 194–214 (ELKLELKQGFKSRIEDVREEI) is the ELK domain. A DNA-binding region (homeobox; TALE-type) is located at residues 215-278 (MRKRRAGKLP…NQRKRNWHNN (64 aa)).

The protein belongs to the TALE/KNOX homeobox family. As to quaternary structure, may form heterodimeric complex with the TALE/BELL proteins. Interacts with OFP1, OFP2, OFP3, OFP4 and OFP6.

The protein localises to the nucleus. Functionally, may be involved in secondary cell wall biosynthesis. The chain is Homeobox protein knotted-1-like 7 (KNAT7) from Arabidopsis thaliana (Mouse-ear cress).